Here is a 107-residue protein sequence, read N- to C-terminus: Inner membrane protein YgbE (107 aa).

Residues 1–20 (MRNSHNITLTNNDSLTEDEE) lie on the Cytoplasmic side of the membrane. The chain crosses the membrane as a helical span at residues 21-43 (TTWSLPGAVVGFISWLFALAMPM). Topologically, residues 44–52 (LIYGSNTLF) are periplasmic. Residues 53-75 (FFIYTWPFFLALMPVAVVVGIAL) traverse the membrane as a helical segment. Residues 76 to 86 (HSLMDGKLRYS) lie on the Cytoplasmic side of the membrane. A helical membrane pass occupies residues 87 to 106 (IVFTLVTVGIMFGALFMWLL). Residue glycine 107 is a topological domain, periplasmic.

The protein localises to the cell inner membrane. The polypeptide is Inner membrane protein YgbE (ygbE) (Escherichia coli (strain K12)).